Here is a 305-residue protein sequence, read N- to C-terminus: Putative glutamine amidotransferase MTH_191 (305 aa).

Residue cysteine 2 is part of the active site. The Glutamine amidotransferase type-2 domain occupies 2-305 (CGIAGVVYKD…SPGEVRVYEI (304 aa)).

This is Putative glutamine amidotransferase MTH_191 from Methanothermobacter thermautotrophicus (strain ATCC 29096 / DSM 1053 / JCM 10044 / NBRC 100330 / Delta H) (Methanobacterium thermoautotrophicum).